A 177-amino-acid chain; its full sequence is Large ribosomal subunit protein uL6 (177 aa).

It belongs to the universal ribosomal protein uL6 family. As to quaternary structure, part of the 50S ribosomal subunit.

Functionally, this protein binds to the 23S rRNA, and is important in its secondary structure. It is located near the subunit interface in the base of the L7/L12 stalk, and near the tRNA binding site of the peptidyltransferase center. This chain is Large ribosomal subunit protein uL6, found in Methylococcus capsulatus (strain ATCC 33009 / NCIMB 11132 / Bath).